A 300-amino-acid chain; its full sequence is Protein p34 (300 aa).

The next 5 membrane-spanning stretches (helical) occupy residues 14–34, 39–59, 87–107, 119–139, and 170–190; these read YLSV…WVVT, ILAS…NLVA, SIFF…SLFI, IIMY…TYVI, and LSDY…LYIF.

The protein belongs to the cation diffusion facilitator (CDF) transporter (TC 2.A.4) family.

Its subcellular location is the cell membrane. This is Protein p34 (p34) from Rickettsia prowazekii (strain Madrid E).